The chain runs to 309 residues: Malate dehydrogenase (309 aa).

NAD(+) is bound by residues 7–12 (GAGHVG) and Asp-32. Arg-81 and Arg-87 together coordinate substrate. NAD(+) is bound by residues Asn-94 and 117-119 (VSN). Positions 119 and 150 each coordinate substrate. His-174 (proton acceptor) is an active-site residue.

Belongs to the LDH/MDH superfamily. MDH type 3 family.

It catalyses the reaction (S)-malate + NAD(+) = oxaloacetate + NADH + H(+). Functionally, catalyzes the reversible oxidation of malate to oxaloacetate. The polypeptide is Malate dehydrogenase (Chlorobium phaeovibrioides (strain DSM 265 / 1930) (Prosthecochloris vibrioformis (strain DSM 265))).